We begin with the raw amino-acid sequence, 950 residues long: Oxysterol-binding protein-related protein 1 (950 aa).

The interval 1–237 is interaction with RAB7A; that stretch reads MNTEAEQQLL…NKVVHKALKR (237 aa). 3 ANK repeats span residues 47–76, 80–109, and 175–204; these read LGWTPLHLACYFGHKQVVEDLLKAGAKVNM, MGDTPLHRAAFTGRKELVLLLLEYDADSTV, and LGNTPLHCAAYRAHKQCVLKLLRSGADPSL. The PH domain occupies 235–334; that stretch reads LKRYEGPLWK…WLEAIEEHSA (100 aa). Positions 430–463 form a coiled coil; it reads NFKLEQEQEKNKILSEALETLATEHHELERSLVE. Residues 469 to 483 carry the FFAT motif; it reads SILSEEEFYDALSGS. Ser499 is subject to Phosphoserine. Disordered stretches follow at residues 502–530 and 795–821; these read ENEVPGSSGKHRMSEGKDCGGGDALSNGI and KKNTEEKKNSKQTSSSEESDEMPVPDS. Residues 879–913 are a coiled coil; that stretch reads RAMENGEIDLASEEKKRLEEKQRAARKNRSKSEED.

This sequence belongs to the OSBP family. In terms of assembly, interacts (via FFAT motif) with VAPA and VAPB. Interacts with the GTP-bound form of RAB7A. Interacts with OAS1B. Interacts (via FFAT motif) with MOSPD2 (via MSP domain). Ubiquitous.

The protein localises to the late endosome. Functionally, binds phospholipids; exhibits strong binding to phosphatidic acid and weak binding to phosphatidylinositol 3-phosphate. Stabilizes GTP-bound RAB7A on late endosomes/lysosomes and alters functional properties of late endocytic compartments via its interaction with RAB7A. Binds 25-hydroxycholesterol and cholesterol. The polypeptide is Oxysterol-binding protein-related protein 1 (Mus musculus (Mouse)).